Reading from the N-terminus, the 272-residue chain is 3-methyl-2-oxobutanoate hydroxymethyltransferase (272 aa).

Mg(2+)-binding residues include Asp50 and Asp89. Residues 50–51 (DS), Asp89, and Lys119 each bind 3-methyl-2-oxobutanoate. A Mg(2+)-binding site is contributed by Glu121. The active-site Proton acceptor is Glu188.

Belongs to the PanB family. In terms of assembly, homodecamer; pentamer of dimers. Mg(2+) is required as a cofactor.

Its subcellular location is the cytoplasm. The enzyme catalyses 3-methyl-2-oxobutanoate + (6R)-5,10-methylene-5,6,7,8-tetrahydrofolate + H2O = 2-dehydropantoate + (6S)-5,6,7,8-tetrahydrofolate. It functions in the pathway cofactor biosynthesis; (R)-pantothenate biosynthesis; (R)-pantoate from 3-methyl-2-oxobutanoate: step 1/2. Its function is as follows. Catalyzes the reversible reaction in which hydroxymethyl group from 5,10-methylenetetrahydrofolate is transferred onto alpha-ketoisovalerate to form ketopantoate. In Methylobacterium radiotolerans (strain ATCC 27329 / DSM 1819 / JCM 2831 / NBRC 15690 / NCIMB 10815 / 0-1), this protein is 3-methyl-2-oxobutanoate hydroxymethyltransferase.